The primary structure comprises 212 residues: Transmembrane emp24 domain-containing protein p24delta7 (212 aa).

Residues 1 to 22 (MNHRRSSIVLLILSILSPVTLS) form the signal peptide. At 23-179 (IRYELLSGHT…HNLNIATNSK (157 aa)) the chain is on the lumenal side. Residues 32 to 147 (TKCISEEIHA…VETMEFEVKK (116 aa)) form the GOLD domain. The stretch at 162-175 (LRDREEEMHNLNIA) forms a coiled coil. Arg165 carries the omega-N-methylated arginine modification. The chain crosses the membrane as a helical span at residues 180-200 (MAWLSFVSLAVCLSVAGLQFW). The Cytoplasmic portion of the chain corresponds to 201 to 212 (HLKTFFQKKKLI). The COPII vesicle coat-binding signature appears at 205–206 (FF). Residues 205-212 (FFQKKKLI) carry the COPI vesicle coat-binding motif.

It belongs to the EMP24/GP25L family. Probably oligomerizes with other members of the EMP24/GP25L family. Associates with the COPI vesicle coat (coatomer). Associates with the COPII vesicle coat (coatomer).

The protein resides in the endoplasmic reticulum membrane. It is found in the golgi apparatus. Its subcellular location is the cis-Golgi network membrane. The protein localises to the golgi stack membrane. In terms of biological role, involved in vesicular protein trafficking. Mainly functions in the early secretory pathway. Thought to act as cargo receptor at the lumenal side for incorporation of secretory cargo molecules into transport vesicles and to be involved in vesicle coat formation at the cytoplasmic side. The chain is Transmembrane emp24 domain-containing protein p24delta7 from Arabidopsis thaliana (Mouse-ear cress).